The primary structure comprises 146 residues: Small ribosomal subunit protein bS6 (146 aa).

Residues 94-146 (GPITTPSPMMQEGKSRPPHSSDEDSENTAPAKAKTADSPGEDTRTTEESDPKP) are disordered. Basic and acidic residues-rich tracts occupy residues 106-115 (GKSRPPHSSD) and 134-146 (EDTR…DPKP).

Belongs to the bacterial ribosomal protein bS6 family.

In terms of biological role, binds together with bS18 to 16S ribosomal RNA. The sequence is that of Small ribosomal subunit protein bS6 from Nitrosomonas europaea (strain ATCC 19718 / CIP 103999 / KCTC 2705 / NBRC 14298).